A 796-amino-acid chain; its full sequence is Ent-copalyl diphosphate synthase 4 (796 aa).

The N-terminal 23 residues, 1-23 (MSSSSIVTSLLRPTTAADGVLPR), are a transit peptide targeting the chloroplast. Lys240 is a binding site for substrate. Mg(2+) is bound by residues Asp371 and Asp373. The short motif at 371–374 (DVDD) is the DXDD motif element. Residue Lys457 coordinates substrate.

It belongs to the terpene synthase family. Tpsc subfamily. Requires Mg(2+) as cofactor. As to expression, highly expressed in leaves, and, at low levels, in stems, but barely in roots and flowers.

Its subcellular location is the plastid. The protein localises to the chloroplast. It carries out the reaction (2E,6E,10E)-geranylgeranyl diphosphate = ent-copalyl diphosphate. The protein operates within secondary metabolite biosynthesis; terpenoid biosynthesis. Its function is as follows. Involved in the biosynthesis of ent-kaurene diterpenoids natural products such as oridonin, miltiradiene, eriocalyxin B and nezukol, known to exhibit antitumor, anti-inflammatory and antibacterial activities. Catalyzes the conversion of (2E,6E,10E)-geranylgeranyl diphosphate (GGPP) to ent-copalyl diphosphate (ent-CPP). In Isodon rubescens (Rabdosia rubescens), this protein is Ent-copalyl diphosphate synthase 4.